We begin with the raw amino-acid sequence, 460 residues long: MESSFHFINEALLITQTFITFHQFLVASACVLIAVFGYYFFKPRCIIYLIDFSCYQPPDFLRAPVSNFIEHLTISGVFDQESLDLQQKILERSGISDDASVPATVHEIPPNASISAAREETHEILFAIVQDLFSKHEIDPKSIDILVSNCSLFCPSPSITSMIINKFGMRSDIKSFSLSGMGCSAGILSVNLVKDLMKIHGDSLALVLSMEAVSPNGYRGKCKSMLIANTIFRMGGAAILLSNRKQDSHKAKYKLQHIIRTHVGSDTESYESVMQQVDEEGKVGVALSKQLVRVASKALKINVVQLGPRVLPYSEQLKYIISFIQRKWGMHKEIYTPNFKKAFEHFCIHAGGRAIIEGVEKHLKLDKEDVEASRSTLYRYGNTSSSSLWYELQYLEAKGRMKMGDKVWQIGFGSGFKANSAVWKCISEIDSRGRNAWSDRIHLYPVCGDTSSALKTELLS.

Residues 21 to 41 (FHQFLVASACVLIAVFGYYFF) form a helical membrane-spanning segment. The region spanning 38 to 328 (YYFFKPRCII…YIISFIQRKW (291 aa)) is the FAE domain. Residues Cys-183, His-262, His-345, His-349, and Asn-382 contribute to the active site.

Belongs to the thiolase-like superfamily. Chalcone/stilbene synthases family. As to expression, expressed in flowers.

It localises to the membrane. The catalysed reaction is a very-long-chain acyl-CoA + malonyl-CoA + H(+) = a very-long-chain 3-oxoacyl-CoA + CO2 + CoA. It participates in lipid metabolism; fatty acid biosynthesis. The polypeptide is 3-ketoacyl-CoA synthase 7 (Arabidopsis thaliana (Mouse-ear cress)).